Here is a 409-residue protein sequence, read N- to C-terminus: Pyrophosphate--fructose 6-phosphate 1-phosphotransferase (409 aa).

A diphosphate-binding site is contributed by glycine 14. Residue aspartate 123 participates in Mg(2+) binding. Substrate-binding positions include 151–153, 196–198, glutamate 268, and 325–328; these read TID, MGR, and YFAR. Residue aspartate 153 is the Proton acceptor of the active site.

The protein belongs to the phosphofructokinase type A (PFKA) family. PPi-dependent PFK group II subfamily. Clade 'P' sub-subfamily. In terms of assembly, homotetramer. Mg(2+) serves as cofactor.

The protein resides in the cytoplasm. The enzyme catalyses beta-D-fructose 6-phosphate + diphosphate = beta-D-fructose 1,6-bisphosphate + phosphate + H(+). The protein operates within carbohydrate degradation; glycolysis; D-glyceraldehyde 3-phosphate and glycerone phosphate from D-glucose: step 3/4. With respect to regulation, non-allosteric. In terms of biological role, catalyzes the phosphorylation of D-fructose 6-phosphate, the first committing step of glycolysis. Uses inorganic phosphate (PPi) as phosphoryl donor instead of ATP like common ATP-dependent phosphofructokinases (ATP-PFKs), which renders the reaction reversible, and can thus function both in glycolysis and gluconeogenesis. Consistently, PPi-PFK can replace the enzymes of both the forward (ATP-PFK) and reverse (fructose-bisphosphatase (FBPase)) reactions. The chain is Pyrophosphate--fructose 6-phosphate 1-phosphotransferase from Methylotuvimicrobium alcaliphilum (strain DSM 19304 / NCIMB 14124 / VKM B-2133 / 20Z) (Methylomicrobium alcaliphilum).